The chain runs to 119 residues: Basic phospholipase A2 notexin (119 aa).

Disulfide bonds link C11–C71, C27–C118, C29–C45, C44–C99, C51–C92, C60–C85, and C78–C90. 3 residues coordinate Ca(2+): Y28, G30, and G32. Residue H48 is part of the active site. D49 contacts Ca(2+). Residue D93 is part of the active site.

It belongs to the phospholipase A2 family. Group I subfamily. D49 sub-subfamily. In terms of assembly, monomer. Requires Ca(2+) as cofactor. In terms of tissue distribution, expressed by the venom gland.

It localises to the secreted. It carries out the reaction a 1,2-diacyl-sn-glycero-3-phosphocholine + H2O = a 1-acyl-sn-glycero-3-phosphocholine + a fatty acid + H(+). Its function is as follows. Snake venom phospholipase A2 (PLA2) that inhibits neuromuscular transmission by blocking acetylcholine release from the nerve termini. Is directly toxic to skeletal muscle upon local application in vivo (dystrophic effect). Also has direct nephrotoxicity in experimental mice; a single subcutaneous dose (1.38 ug/kg) produces renal tubular and glomerular damage within 24 hours. PLA2 catalyzes the calcium-dependent hydrolysis of the 2-acyl groups in 3-sn-phosphoglycerides. The protein is Basic phospholipase A2 notexin of Notechis scutatus scutatus (Mainland tiger snake).